A 101-amino-acid polypeptide reads, in one-letter code: MIPGEIIAASGDIELNAGAPTVTLEVSNTGDRPVQVGSHYHFAETNAGLSFDRAAAHGKRLDIPAGTAVRFEPGQTRSVTLIPLSGKREVYGFRQLVMGKL.

It belongs to the urease beta subunit family. As to quaternary structure, heterotrimer of UreA (gamma), UreB (beta) and UreC (alpha) subunits. Three heterotrimers associate to form the active enzyme.

The protein resides in the cytoplasm. The catalysed reaction is urea + 2 H2O + H(+) = hydrogencarbonate + 2 NH4(+). It functions in the pathway nitrogen metabolism; urea degradation; CO(2) and NH(3) from urea (urease route): step 1/1. This Rhizobium leguminosarum bv. trifolii (strain WSM2304) protein is Urease subunit beta.